A 346-amino-acid chain; its full sequence is Haptoglobin-related protein (346 aa).

The not cleaved signal peptide spans 1–16 (DLGAVIYLLLWGRQLF). A Sushi domain is found at 32-85 (FPKPPEIANGYVEHLFRYQRKNYYRLRTEGDGVYTLNDKKQWINKAVGDKLPEC). Residues 102–344 (ILGGHLDAKG…IHVWVQKTIA (243 aa)) form the Peptidase S1 domain. 2 cysteine pairs are disulfide-bonded: C249–C280 and C291–C321.

Belongs to the peptidase S1 family.

The protein resides in the secreted. Its function is as follows. Primate-specific plasma protein associated with apolipoprotein L-I (apoL-I)-containing high-density lipoprotein (HDL). Binds hemoglobin with high affinity and may contribute to the clearance of cell-free hemoglobin to allow hepatic recycling of heme iron. This chain is Haptoglobin-related protein (HPR), found in Pan troglodytes (Chimpanzee).